The following is a 67-amino-acid chain: Large ribosomal subunit protein uL29 (67 aa).

It belongs to the universal ribosomal protein uL29 family.

This Desulforudis audaxviator (strain MP104C) protein is Large ribosomal subunit protein uL29.